The primary structure comprises 358 residues: 3'(2'),5'-bisphosphate nucleotidase 2 (358 aa).

Catalysis depends on aspartate 54, which acts as the Proton acceptor. 4 residues coordinate Mg(2+): glutamate 77, aspartate 141, isoleucine 143, and aspartate 144. Residue threonine 146 is the Proton acceptor of the active site. Positions 146, 243, 272, 275, 289, and 302 each coordinate adenosine 3',5'-bisphosphate. Histidine 243, serine 272, lysine 275, arginine 289, and aspartate 302 together coordinate AMP. Aspartate 302 contacts Mg(2+).

The protein belongs to the inositol monophosphatase superfamily. The cofactor is Mg(2+).

The enzyme catalyses 3'-phosphoadenylyl sulfate + H2O = adenosine 5'-phosphosulfate + phosphate. It catalyses the reaction adenosine 3',5'-bisphosphate + H2O = AMP + phosphate. The catalysed reaction is adenosine 2',5'-bisphosphate + H2O = AMP + phosphate. In terms of biological role, phosphatase that converts adenosine 3'-phosphate 5'-phosphosulfate (PAPS) to adenosine 5'-phosphosulfate (APS) and 3'(2')-phosphoadenosine 5'-phosphate (PAP) to AMP. Regulates the flux of sulfur in the sulfur-activation pathway by converting PAPS to APS. Involved in salt tolerance. The protein is 3'(2'),5'-bisphosphate nucleotidase 2 (HAL22) of Candida albicans (strain SC5314 / ATCC MYA-2876) (Yeast).